Here is a 159-residue protein sequence, read N- to C-terminus: 2-C-methyl-D-erythritol 2,4-cyclodiphosphate synthase (159 aa).

A divalent metal cation is bound by residues Asp10 and His12. Residues 10-12 and 37-38 contribute to the 4-CDP-2-C-methyl-D-erythritol 2-phosphate site; these read DVH and HS. Position 45 (His45) interacts with a divalent metal cation. 4-CDP-2-C-methyl-D-erythritol 2-phosphate contacts are provided by residues 59–61, 64–68, 103–109, 135–138, Phe142, and Arg145; these read DIG, FLDTD, AQAPKML, and TTTE.

The protein belongs to the IspF family. In terms of assembly, homotrimer. The cofactor is a divalent metal cation.

The catalysed reaction is 4-CDP-2-C-methyl-D-erythritol 2-phosphate = 2-C-methyl-D-erythritol 2,4-cyclic diphosphate + CMP. It participates in isoprenoid biosynthesis; isopentenyl diphosphate biosynthesis via DXP pathway; isopentenyl diphosphate from 1-deoxy-D-xylulose 5-phosphate: step 4/6. Its function is as follows. Involved in the biosynthesis of isopentenyl diphosphate (IPP) and dimethylallyl diphosphate (DMAPP), two major building blocks of isoprenoid compounds. Catalyzes the conversion of 4-diphosphocytidyl-2-C-methyl-D-erythritol 2-phosphate (CDP-ME2P) to 2-C-methyl-D-erythritol 2,4-cyclodiphosphate (ME-CPP) with a corresponding release of cytidine 5-monophosphate (CMP). The chain is 2-C-methyl-D-erythritol 2,4-cyclodiphosphate synthase from Francisella tularensis subsp. tularensis (strain FSC 198).